A 197-amino-acid chain; its full sequence is MKTTQFILASASPARRRLLQTVGIEPIVSPSDFDESQIEETEPGKLVQILAQCKAETVAPQFPSGLVMGCDSVLAIDGKIHGKPIDADEAIARWQLMRGQVGDLYTGHVLIDNLQNRTLVKCQVTRVYFANISDRTIQAYVATGEPLKCAGAFALEGFGSLFIEKIAGCHSNVIGLSLPLLRQMLEELNYDVTDFWK.

Residue aspartate 71 is the Proton acceptor of the active site.

Belongs to the Maf family. Requires a divalent metal cation as cofactor.

The protein localises to the cytoplasm. It catalyses the reaction a ribonucleoside 5'-triphosphate + H2O = a ribonucleoside 5'-phosphate + diphosphate + H(+). It carries out the reaction a 2'-deoxyribonucleoside 5'-triphosphate + H2O = a 2'-deoxyribonucleoside 5'-phosphate + diphosphate + H(+). Its function is as follows. Nucleoside triphosphate pyrophosphatase. May have a dual role in cell division arrest and in preventing the incorporation of modified nucleotides into cellular nucleic acids. In Trichormus variabilis (strain ATCC 29413 / PCC 7937) (Anabaena variabilis), this protein is Nucleoside triphosphate pyrophosphatase.